We begin with the raw amino-acid sequence, 299 residues long: Ribosomal RNA small subunit methyltransferase H (299 aa).

Residues 35 to 37, aspartate 54, tyrosine 80, aspartate 101, and glutamine 108 contribute to the S-adenosyl-L-methionine site; that span reads GGH.

This sequence belongs to the methyltransferase superfamily. RsmH family.

The protein localises to the cytoplasm. It carries out the reaction cytidine(1402) in 16S rRNA + S-adenosyl-L-methionine = N(4)-methylcytidine(1402) in 16S rRNA + S-adenosyl-L-homocysteine + H(+). Its function is as follows. Specifically methylates the N4 position of cytidine in position 1402 (C1402) of 16S rRNA. The chain is Ribosomal RNA small subunit methyltransferase H from Coprothermobacter proteolyticus (strain ATCC 35245 / DSM 5265 / OCM 4 / BT).